We begin with the raw amino-acid sequence, 616 residues long: MAEKQIHTFQTEVSQLLDLMIHSLYSNKEIFLRELVSNSSDAVDKLKFKSLSDDTLIEGKEELQIHINTNKDASTITITDNGIGMTEAEVNKNIGTIANSGTKKFLKSLDEKQTKDSNLIGQFGVGFYSSFIVADKVELITRKAGSKSKKGTKWTSTGKGKYSIERVNCLNFGTSVTLHIKKDEKEFLDDYRLRGIISKYSDHITVPIMMIKASEDGKDIEYERINKANAFWSQDKRDLKQENYDEFYKSLTYDFEAPLTQLHNRVEGNIDYTSLLFIPSKAPHDMWEPKRKGGIKLYAKRVFIMEDNEALMPLYLRFVKGVIDTADLPLNVSREILQGNKVVDTIRKASVSRVLKELEKMAKNKPEDYEKFWQEFGMVMKEGVVEDFANKDKIAKLLRFTTNKSESAAQTATLECYVKSMQKDQKAIYYITAETYEAAKGSPHLEIFNQKDIEVLLLSDRVDEWMVNNFGKFEDVPLKSITKGDLEGLDSKEEKKAKEEVSKNFEKVIEKMQKILDTQVKEIKVSSRLSDSPSCLVVDENEMGGNMERIMKSLGQDVPDTKPILEINPNHPLVKKLKTKIDEDLVKVLFDQAVLSEGVQLKDPAEFVKRINKLIN.

The segment at 1 to 334 (MAEKQIHTFQ…TADLPLNVSR (334 aa)) is a; substrate-binding. The interval 335–549 (EILQGNKVVD…ENEMGGNMER (215 aa)) is b. The c stretch occupies residues 550-616 (IMKSLGQDVP…FVKRINKLIN (67 aa)).

Belongs to the heat shock protein 90 family. As to quaternary structure, homodimer.

It localises to the cytoplasm. Functionally, molecular chaperone. Has ATPase activity. This Ruthia magnifica subsp. Calyptogena magnifica protein is Chaperone protein HtpG.